A 257-amino-acid polypeptide reads, in one-letter code: UPF0246 protein lpg1366 (257 aa).

Belongs to the UPF0246 family.

This is UPF0246 protein lpg1366 from Legionella pneumophila subsp. pneumophila (strain Philadelphia 1 / ATCC 33152 / DSM 7513).